The primary structure comprises 402 residues: Multidrug resistance protein MdtH (402 aa).

Over 1-12 (MSRVSQARNLGK) the chain is Cytoplasmic. A helical transmembrane segment spans residues 13–33 (YFLLIDNMLVVLVFFVVFPLI). The Periplasmic segment spans residues 34–98 (SIRFVDQMGW…GFATMGIAHE (65 aa)). The helical transmembrane segment at 99 to 116 (PWLLWFSCFLSGLGGTLF) threads the bilayer. Residues 117–138 (DPPRSALVVKLIRPEQRGRFFS) are Cytoplasmic-facing. The chain crosses the membrane as a helical span at residues 139–159 (LLMMQDSAGAVIGALLGSWLL). Residues 160 to 164 (QYDFR) lie on the Periplasmic side of the membrane. A helical membrane pass occupies residues 165–185 (LVCATGAILFILCALFNAWLL). Residues 186-213 (PAWKLSTVRTPVREGMRRVMSDKRFVTY) are Cytoplasmic-facing. A helical transmembrane segment spans residues 214–234 (VLTLAGYYMLAVQVMLMLPIM). Topologically, residues 235-243 (VNDIAGSPA) are periplasmic. The chain crosses the membrane as a helical span at residues 244–264 (AVKWMYAIEACLSLTLLYPIA). Over 265 to 276 (RWSEKRFRLEHR) the chain is Cytoplasmic. A helical transmembrane segment spans residues 277 to 297 (LMAGLLVMSLSMIPIGMVGNL). The Periplasmic portion of the chain corresponds to 298–299 (QQ). Residues 300–320 (LFTLICAFYIGSVIAEPARET) form a helical membrane-spanning segment. Over 321-339 (LSASLADARARGSYMGFSR) the chain is Cytoplasmic. Residues 340–360 (LGLAIGGAIGYIGGGWLFDMG) form a helical membrane-spanning segment. The Periplasmic segment spans residues 361–367 (KALTQPE). The chain crosses the membrane as a helical span at residues 368 to 388 (LPWMMLGIIGFITFLALGWQF). Topologically, residues 389-402 (SHKRTPRRMLEPGA) are cytoplasmic.

This sequence belongs to the major facilitator superfamily. DHA1 family. MdtH (TC 2.A.1.2.21) subfamily.

It is found in the cell inner membrane. The protein is Multidrug resistance protein MdtH of Salmonella choleraesuis (strain SC-B67).